The following is a 509-amino-acid chain: Cobyric acid synthase (509 aa).

The GATase cobBQ-type domain maps to 262 to 459 (EIKVGIIKLP…IHGIFENDIW (198 aa)). The active-site Nucleophile is C343. The active site involves H451.

Belongs to the CobB/CobQ family. CobQ subfamily.

The protein operates within cofactor biosynthesis; adenosylcobalamin biosynthesis. In terms of biological role, catalyzes amidations at positions B, D, E, and G on adenosylcobyrinic A,C-diamide. NH(2) groups are provided by glutamine, and one molecule of ATP is hydrogenolyzed for each amidation. The sequence is that of Cobyric acid synthase from Prochlorococcus marinus (strain MIT 9312).